The sequence spans 82 residues: Sulfur carrier protein TusA (82 aa).

The Cysteine persulfide intermediate role is filled by Cys19.

This sequence belongs to the sulfur carrier protein TusA family.

It is found in the cytoplasm. Its function is as follows. Sulfur carrier protein which probably makes part of a sulfur-relay system. The polypeptide is Sulfur carrier protein TusA (Vibrio parahaemolyticus serotype O3:K6 (strain RIMD 2210633)).